A 145-amino-acid chain; its full sequence is 3-dehydroquinate dehydratase (145 aa).

Tyr-24 functions as the Proton acceptor in the catalytic mechanism. Residues Asn-75, His-81, and Asp-88 each contribute to the substrate site. His-101 acts as the Proton donor in catalysis. Substrate contacts are provided by residues 102-103 (IS) and Arg-112.

This sequence belongs to the type-II 3-dehydroquinase family. In terms of assembly, homododecamer.

The enzyme catalyses 3-dehydroquinate = 3-dehydroshikimate + H2O. It functions in the pathway metabolic intermediate biosynthesis; chorismate biosynthesis; chorismate from D-erythrose 4-phosphate and phosphoenolpyruvate: step 3/7. In terms of biological role, catalyzes a trans-dehydration via an enolate intermediate. This is 3-dehydroquinate dehydratase from Corynebacterium glutamicum (strain R).